We begin with the raw amino-acid sequence, 162 residues long: Ribonuclease (162 aa).

The first 29 residues, 1–29 (MKKISSVFTMFALIAAILFSGFIPQQAYA), serve as a signal peptide directing secretion. The propeptide occupies 30–53 (ETPLTQTATNETATIQLTSDVHTL). E125 functions as the Proton acceptor in the catalytic mechanism. Catalysis depends on H154, which acts as the Proton donor.

It belongs to the ribonuclease N1/T1 family.

It is found in the secreted. Functionally, this is a purine-specific ribonuclease. This Bacillus intermedius protein is Ribonuclease.